The sequence spans 98 residues: uncharacterized protein (98 aa).

A signal peptide spans 1–23 (MKKMQSIVLALSLVLVAPMAAQA). The disordered stretch occupies residues 68-98 (WHLHGPPPPPRHHKKAPHDHHGGHGPGKHHR). A compositionally biased stretch (basic residues) spans 77–98 (PRHHKKAPHDHHGGHGPGKHHR).

This sequence to E.coli YpeC.

This is an uncharacterized protein from Escherichia coli (strain K12).